The sequence spans 679 residues: Shutoff protein (679 aa).

Residues 178–232 form a binding to host EIF4G region; it reads LFDYLIGESQDPNDLDSEYKLAFTDEDLPQEGQAEKTKQRETLGAVATFGAVLLS. Residues 235 to 353 enclose the RRM domain; sequence RLFTHPVVIK…ELAGANYAEA (119 aa). 2 positions are modified to phosphotyrosine; by host: tyrosine 252 and tyrosine 564. The interval 552 to 679 is disordered; the sequence is REKSILKRGG…SLQGTRRESS (128 aa). Positions 661-679 are enriched in basic and acidic residues; sequence PRQETAEKESLQGTRRESS.

Belongs to the adenoviridae shutoff protein family. As to quaternary structure, monomer. Interacts with hexon protein; this interaction allows chaperoning and trimerization of hexon proteins. Interacts (via N-terminus) with host initiation factor EIF4G (via C-terminus). Interacts (via RRM domain) with viral mRNAs that contain the tripartite leader; this interaction allows ribosome shunting and expression of viral late mRNAs. Might be cleaved by the viral protease. In terms of processing, phosphorylated. Tyrosine phosphorylation enhances preferential binding to tripartite leader mRNAs and allows ribosome shunting. Post-translationally, methylated. Asymmetric dimethylation by host PRMT1 of the Arg/Gly-rich region may regulate shutoff protein binding to hexon and promote the capsid assembly in the nucleus.

It localises to the host cytoplasm. Functionally, protein that inhibits host translation while promoting late viral translation by ribosome shunting. Blocks host cap-dependent translation by binding to eIF4G, displacing MKNK1 from cap initiation complexes and preventing EIF4E phosphorylation. Binds to the tripartite leader sequence of viral late mRNAs and recruits host eIF4G, PABPC1/poly-A binding protein and 40S ribosomes subunits on viral mRNAs, allowing ribosome shunting and efficient translation of late viral mRNAs even though conventional translation via ribosome scanning from the cap has been shut off in the host cell. During assembly, acts as a chaperone protein that helps hexon proteins assembly into trimers. This chain is Shutoff protein, found in Snake adenovirus serotype 1 (SnAdV-1).